The chain runs to 178 residues: Interleukin-1 receptor antagonist protein (178 aa).

The N-terminal stretch at 1-26 (MEICWGPYSHLISLLLILLFHSEAAC) is a signal peptide. A disulfide bridge connects residues C92 and C142. N110 is a glycosylation site (N-linked (GlcNAc...) asparagine).

This sequence belongs to the IL-1 family.

It is found in the secreted. Its subcellular location is the cytoplasm. In terms of biological role, anti-inflammatory antagonist of interleukin-1 family of proinflammatory cytokines such as interleukin-1beta/IL1B and interleukin-1alpha/IL1A. Protects from immune dysregulation and uncontrolled systemic inflammation triggered by IL1 for a range of innate stimulatory agents such as pathogens. This is Interleukin-1 receptor antagonist protein (Il1rn) from Mus musculus (Mouse).